The sequence spans 198 residues: SOSS complex subunit B2 (198 aa).

Positions 26-89 form a DNA-binding region, OB; sequence IVLEIGRVTK…SMWKGCLTLY (64 aa). The interval 114 to 198 is disordered; sequence EPNPDYRGQQ…ARDPRRAFKR (85 aa). 2 stretches are compositionally biased toward polar residues: residues 136–151 and 173–188; these read STNTFGPVGNGDQTGP and LPGTPSSQTVRTTISN.

The protein belongs to the SOSS-B family. SOSS-B2 subfamily. In terms of assembly, component of the SOSS complex, composed of SOSS-B (SOSS-B1/NABP2 or SOSS-B2/NABP1), SOSS-A/INTS3 and SOSS-C/INIP. SOSS complexes containing SOSS-B1/NABP2 are more abundant than complexes containing SOSS-B2/NABP1. As to expression, ubiquitous with high expression in the thymus.

It is found in the nucleus. In terms of biological role, component of the SOSS complex, a multiprotein complex that functions downstream of the MRN complex to promote DNA repair and G2/M checkpoint. In the SOSS complex, acts as a sensor of single-stranded DNA that binds to single-stranded DNA, in particular to polypyrimidines. The SOSS complex associates with DNA lesions and influences diverse endpoints in the cellular DNA damage response including cell-cycle checkpoint activation, recombinational repair and maintenance of genomic stability. Required for efficient homologous recombination-dependent repair of double-strand breaks (DSBs) and ATM-dependent signaling pathways. The chain is SOSS complex subunit B2 (Nabp1) from Mus musculus (Mouse).